A 285-amino-acid polypeptide reads, in one-letter code: Steroidogenic acute regulatory protein, mitochondrial (285 aa).

Residues 1 to 63 constitute a mitochondrion transit peptide; it reads MLLATFKLCA…RQSSLLGSQL (63 aa). Serine 57 and serine 195 each carry phosphoserine; by PKA. In terms of domain architecture, START spans 67–280; that stretch reads LYSDQELAYI…LRKRLESSPA (214 aa).

As to quaternary structure, may interact with TSPO.

It is found in the mitochondrion. The enzyme catalyses cholesterol(in) = cholesterol(out). It functions in the pathway steroid metabolism; cholesterol metabolism. Plays a key role in steroid hormone synthesis by enhancing the metabolism of cholesterol into pregnenolone. Mediates the transfer of cholesterol from the outer mitochondrial membrane to the inner mitochondrial membrane where it is cleaved to pregnenolone. This is Steroidogenic acute regulatory protein, mitochondrial (STAR) from Equus caballus (Horse).